The chain runs to 66 residues: Alpha-conotoxin-like Tx2 (66 aa).

An N-terminal signal peptide occupies residues methionine 1–serine 21. A propeptide spanning residues phenylalanine 22 to proline 49 is cleaved from the precursor. 2 cysteine pairs are disulfide-bonded: cysteine 51/cysteine 57 and cysteine 52/cysteine 65. The interval serine 53–proline 55 is ser-Xaa-Pro motif, crucial for potent interaction with nAChR.

This sequence belongs to the conotoxin A superfamily. As to expression, expressed by the venom duct.

Its subcellular location is the secreted. Functionally, alpha-conotoxins act on postsynaptic membranes, they bind to the nicotinic acetylcholine receptors (nAChR) and thus inhibit them. The polypeptide is Alpha-conotoxin-like Tx2 (Conus textile (Cloth-of-gold cone)).